Reading from the N-terminus, the 260-residue chain is Phosphate import ATP-binding protein PstB (260 aa).

The region spanning L14–I255 is the ABC transporter domain. G46–S53 lines the ATP pocket.

Belongs to the ABC transporter superfamily. Phosphate importer (TC 3.A.1.7) family. In terms of assembly, the complex is composed of two ATP-binding proteins (PstB), two transmembrane proteins (PstC and PstA) and a solute-binding protein (PstS).

The protein localises to the cell inner membrane. It catalyses the reaction phosphate(out) + ATP + H2O = ADP + 2 phosphate(in) + H(+). Functionally, part of the ABC transporter complex PstSACB involved in phosphate import. Responsible for energy coupling to the transport system. This chain is Phosphate import ATP-binding protein PstB, found in Thiobacillus denitrificans (strain ATCC 25259 / T1).